Reading from the N-terminus, the 196-residue chain is ATP-dependent Clp protease proteolytic subunit (196 aa).

The active-site Nucleophile is S96. H121 is a catalytic residue.

It belongs to the peptidase S14 family. In terms of assembly, fourteen ClpP subunits assemble into 2 heptameric rings which stack back to back to give a disk-like structure with a central cavity, resembling the structure of eukaryotic proteasomes.

The protein localises to the cytoplasm. The enzyme catalyses Hydrolysis of proteins to small peptides in the presence of ATP and magnesium. alpha-casein is the usual test substrate. In the absence of ATP, only oligopeptides shorter than five residues are hydrolyzed (such as succinyl-Leu-Tyr-|-NHMec, and Leu-Tyr-Leu-|-Tyr-Trp, in which cleavage of the -Tyr-|-Leu- and -Tyr-|-Trp bonds also occurs).. In terms of biological role, cleaves peptides in various proteins in a process that requires ATP hydrolysis. Has a chymotrypsin-like activity. Plays a major role in the degradation of misfolded proteins. The chain is ATP-dependent Clp protease proteolytic subunit from Streptococcus mutans serotype c (strain ATCC 700610 / UA159).